A 132-amino-acid polypeptide reads, in one-letter code: Methylglyoxal synthase (132 aa).

The 132-residue stretch at 1-132 (MNIALIAHDQ…LLEWREIEDK (132 aa)) folds into the MGS-like domain. Substrate contacts are provided by His8 and Lys12. The active-site Proton donor/acceptor is the Asp60. His87 is a substrate binding site.

The protein belongs to the methylglyoxal synthase family.

It catalyses the reaction dihydroxyacetone phosphate = methylglyoxal + phosphate. Functionally, catalyzes the formation of methylglyoxal from dihydroxyacetone phosphate. The sequence is that of Methylglyoxal synthase from Thermoanaerobacter pseudethanolicus (strain ATCC 33223 / 39E) (Clostridium thermohydrosulfuricum).